The primary structure comprises 543 residues: CTP synthase (543 aa).

Residues 1–265 (MTKFIFVTGG…DRLVTDRFRI (265 aa)) form an amidoligase domain region. CTP is bound at residue S13. Residue S13 coordinates UTP. Residues 14–19 (SLGKGI) and D71 each bind ATP. 2 residues coordinate Mg(2+): D71 and E139. Residues 146–148 (DIE), 186–191 (KTKPTQ), and K222 each bind CTP. Residues 186 to 191 (KTKPTQ) and K222 each bind UTP. One can recognise a Glutamine amidotransferase type-1 domain in the interval 290-541 (EIAMVGKYVD…VEAASQHKQT (252 aa)). An L-glutamine-binding site is contributed by G351. The active-site Nucleophile; for glutamine hydrolysis is the C378. Residues 379–382 (LGMQ), E402, and R469 each bind L-glutamine. Residues H514 and E516 contribute to the active site.

The protein belongs to the CTP synthase family. As to quaternary structure, homotetramer.

It catalyses the reaction UTP + L-glutamine + ATP + H2O = CTP + L-glutamate + ADP + phosphate + 2 H(+). It carries out the reaction L-glutamine + H2O = L-glutamate + NH4(+). The enzyme catalyses UTP + NH4(+) + ATP = CTP + ADP + phosphate + 2 H(+). Its pathway is pyrimidine metabolism; CTP biosynthesis via de novo pathway; CTP from UDP: step 2/2. With respect to regulation, allosterically activated by GTP, when glutamine is the substrate; GTP has no effect on the reaction when ammonia is the substrate. The allosteric effector GTP functions by stabilizing the protein conformation that binds the tetrahedral intermediate(s) formed during glutamine hydrolysis. Inhibited by the product CTP, via allosteric rather than competitive inhibition. Functionally, catalyzes the ATP-dependent amination of UTP to CTP with either L-glutamine or ammonia as the source of nitrogen. Regulates intracellular CTP levels through interactions with the four ribonucleotide triphosphates. The chain is CTP synthase from Hydrogenovibrio crunogenus (strain DSM 25203 / XCL-2) (Thiomicrospira crunogena).